A 132-amino-acid chain; its full sequence is Small ribosomal subunit protein uS11 (132 aa).

Belongs to the universal ribosomal protein uS11 family. As to quaternary structure, part of the 30S ribosomal subunit. Interacts with proteins S7 and S18. Binds to IF-3.

In terms of biological role, located on the platform of the 30S subunit, it bridges several disparate RNA helices of the 16S rRNA. Forms part of the Shine-Dalgarno cleft in the 70S ribosome. The protein is Small ribosomal subunit protein uS11 of Cyanothece sp. (strain PCC 7425 / ATCC 29141).